The chain runs to 359 residues: Fructose-bisphosphate aldolase (359 aa).

A D-glyceraldehyde 3-phosphate-binding site is contributed by Ser-61. The active-site Proton donor is Asp-109. Positions 110, 144, 174, and 226 each coordinate Zn(2+). Gly-227 lines the dihydroxyacetone phosphate pocket. His-265 is a binding site for Zn(2+). Residues 266-268 and 287-290 contribute to the dihydroxyacetone phosphate site; these read GGS and NIDT.

It belongs to the class II fructose-bisphosphate aldolase family. It depends on Zn(2+) as a cofactor.

The catalysed reaction is beta-D-fructose 1,6-bisphosphate = D-glyceraldehyde 3-phosphate + dihydroxyacetone phosphate. Its pathway is carbohydrate degradation; glycolysis; D-glyceraldehyde 3-phosphate and glycerone phosphate from D-glucose: step 4/4. Catalyzes the aldol condensation of dihydroxyacetone phosphate (DHAP or glycerone-phosphate) with glyceraldehyde 3-phosphate (G3P) to form fructose 1,6-bisphosphate (FBP) in gluconeogenesis and the reverse reaction in glycolysis. The chain is Fructose-bisphosphate aldolase (fba) from Borreliella burgdorferi (strain ATCC 35210 / DSM 4680 / CIP 102532 / B31) (Borrelia burgdorferi).